Here is a 327-residue protein sequence, read N- to C-terminus: uncharacterized protein (327 aa).

The S4 RNA-binding domain occupies 12-84 (MRIDRYLTQQ…IPITILYEDD (73 aa)). The active site involves aspartate 137.

It belongs to the pseudouridine synthase RluA family.

The enzyme catalyses a uridine in RNA = a pseudouridine in RNA. This is an uncharacterized protein from Chlorobaculum parvum (strain DSM 263 / NCIMB 8327) (Chlorobium vibrioforme subsp. thiosulfatophilum).